The chain runs to 146 residues: Hemoglobin subunit beta (146 aa).

The region spanning 2-146 (HWSAEEKQLI…VAHALARKYH (145 aa)) is the Globin domain. Heme b-binding residues include His63 and His92.

It belongs to the globin family. In terms of assembly, heterotetramer of two alpha chains and two beta chains. In terms of tissue distribution, red blood cells.

Functionally, involved in oxygen transport from the lung to the various peripheral tissues. The protein is Hemoglobin subunit beta (HBB) of Anser anser anser (Western greylag goose).